The following is a 315-amino-acid chain: Protoheme IX farnesyltransferase (315 aa).

A run of 9 helical transmembrane segments spans residues 21–41 (YFAL…LVGL), 52–74 (VGFC…NMWW), 98–118 (GEAL…LALA), 121–141 (LLAA…YSMW), 150–170 (IVIG…AATG), 177–197 (VLMF…LALF), 223–243 (ILVY…TPVA), 246–266 (LYLA…WDIW), and 284–304 (FFKF…AEAI).

Belongs to the UbiA prenyltransferase family. Protoheme IX farnesyltransferase subfamily. In terms of assembly, interacts with CtaA.

Its subcellular location is the cell inner membrane. It carries out the reaction heme b + (2E,6E)-farnesyl diphosphate + H2O = Fe(II)-heme o + diphosphate. Its pathway is porphyrin-containing compound metabolism; heme O biosynthesis; heme O from protoheme: step 1/1. Converts heme B (protoheme IX) to heme O by substitution of the vinyl group on carbon 2 of heme B porphyrin ring with a hydroxyethyl farnesyl side group. The polypeptide is Protoheme IX farnesyltransferase (Dinoroseobacter shibae (strain DSM 16493 / NCIMB 14021 / DFL 12)).